A 260-amino-acid chain; its full sequence is 14-3-3-like protein GF14-F (260 aa).

The segment at 241–260 is disordered; sequence NAEDGGDEIKEAAKPEGEGH. Positions 247–260 are enriched in basic and acidic residues; it reads DEIKEAAKPEGEGH.

The protein belongs to the 14-3-3 family. In terms of assembly, may form a complex with the transcriptional activator VP1 and the bZIP transcription factor EMBP1. Expressed in seedlings, roots and panicles and at lower levels in flag leaves and internodes.

The protein resides in the cytoplasm. It localises to the nucleus. Is associated with a DNA binding complex that binds to the G box, a well-characterized cis-acting DNA regulatory element found in plant genes. This is 14-3-3-like protein GF14-F (GF14F) from Oryza sativa subsp. japonica (Rice).